Here is a 456-residue protein sequence, read N- to C-terminus: uncharacterized protein (456 aa).

Residues 415–428 (SNSNGSSSSGNSSS) are compositionally biased toward low complexity. The disordered stretch occupies residues 415–444 (SNSNGSSSSGNSSSIYNSHLMNDKKKNNNA).

This is an uncharacterized protein from Saccharomyces cerevisiae (strain ATCC 204508 / S288c) (Baker's yeast).